The following is an 813-amino-acid chain: Ubiquitin carboxyl-terminal hydrolase 45 (813 aa).

Over residues Met-1–Gly-14 the composition is skewed to basic and acidic residues. The interval Met-1–Asp-27 is disordered. The segment at Met-1–Cys-62 is interaction with ERCC1. Phosphoserine is present on residues Ser-28 and Ser-29. The UBP-type zinc-finger motif lies at Leu-36–His-153. 12 residues coordinate Zn(2+): Cys-38, His-40, Cys-62, Cys-65, Cys-85, Cys-88, Cys-93, His-101, His-105, His-114, Cys-127, and Cys-130. One can recognise a USP domain in the interval Lys-191 to Ile-812. Residue Cys-200 is the Nucleophile of the active site. Composition is skewed to basic and acidic residues over residues Leu-405–Lys-414 and Trp-450–Asn-466. The segment at Leu-405–Glu-552 is disordered. Residues Pro-472–Asp-488 show a composition bias toward polar residues. A phosphoserine mark is found at Ser-507 and Ser-525. A compositionally biased stretch (basic and acidic residues) spans Ser-521–Pro-533. His-745 serves as the catalytic Proton acceptor.

Belongs to the peptidase C19 family. As to quaternary structure, interacts with ERCC1. The catalytically active form interacts with SPDL1. Retina.

Its subcellular location is the photoreceptor inner segment. The protein localises to the cytoplasm. The protein resides in the nucleus. The catalysed reaction is Thiol-dependent hydrolysis of ester, thioester, amide, peptide and isopeptide bonds formed by the C-terminal Gly of ubiquitin (a 76-residue protein attached to proteins as an intracellular targeting signal).. Functionally, catalyzes the deubiquitination of SPDL1. Plays a role in the repair of UV-induced DNA damage via deubiquitination of ERCC1, promoting its recruitment to DNA damage sites. May be involved in the maintenance of photoreceptor function. May play a role in normal retinal development. Plays a role in cell migration. The chain is Ubiquitin carboxyl-terminal hydrolase 45 (Usp45) from Mus musculus (Mouse).